The following is a 344-amino-acid chain: Heat-inducible transcription repressor HrcA (344 aa).

This sequence belongs to the HrcA family.

Its function is as follows. Negative regulator of class I heat shock genes (grpE-dnaK-dnaJ and groELS operons). Prevents heat-shock induction of these operons. In Moorella thermoacetica (strain ATCC 39073 / JCM 9320), this protein is Heat-inducible transcription repressor HrcA.